A 260-amino-acid polypeptide reads, in one-letter code: tRNA (guanine-N(1)-)-methyltransferase (260 aa).

S-adenosyl-L-methionine contacts are provided by residues glycine 117 and 137–142 (LGDFVL).

It belongs to the RNA methyltransferase TrmD family. In terms of assembly, homodimer.

The protein resides in the cytoplasm. The catalysed reaction is guanosine(37) in tRNA + S-adenosyl-L-methionine = N(1)-methylguanosine(37) in tRNA + S-adenosyl-L-homocysteine + H(+). Specifically methylates guanosine-37 in various tRNAs. In Cupriavidus taiwanensis (strain DSM 17343 / BCRC 17206 / CCUG 44338 / CIP 107171 / LMG 19424 / R1) (Ralstonia taiwanensis (strain LMG 19424)), this protein is tRNA (guanine-N(1)-)-methyltransferase.